The chain runs to 632 residues: MTQAEREQENGKEKEKEREKEKEKEKEQRGIKRPIAPPVIPEPLQEQIQSNFIVVLHPGSKTLRIGRATDTLPATVPHVIARRHKQTCQTRYEDGWLVREGLNKPESNEQRQNGLKMVDQAIWSKKMSNGVRRTPVSAEQARSYNRLIRPAGLDTSSRMKWTNTAHHPEHLVGEEALYVNPTDCYNVHWPISRGQLNVHGGVGGSLTAVLADLEAIWSHVIQKQLEIPLKDLKYYRCILLVPDIYNRHHIKELVNMLLLNMGFSAIVVHQESVCATFGSGLSSACVVDVGDQKTSLCCVEDGVSHRNSRLCLAYGGADVTRCFFWLLQRAGFPYRECQLSNRVDCILLQQLKETFCHLDQDISGLQDHEFRTRFPESPALLYQVRLGDEKLQAPMALFYPTTFGIVGQKMTSLQHRSQGDPEDPHDEHYLLGTQSKQDQSSKASAERKSLPKPPGFEGELSSQGGDPSERGGGAHGQDVELGHSQNDCLMGGAEMEEPPSALLSRKTAMTQFEGKALGLDKAILHSIDCCASDETKRKMYSSILVVGGGLLFHRAQEFLQHRILNKMPPSFRRVVESVEVITRPKDMDPRLISWKGGAVLACLDTTQEMWIHQREWQRFGVRMLRERAAFVW.

Basic and acidic residues predominate over residues 1 to 30 (MTQAEREQENGKEKEKEREKEKEKEKEQRG). The segment at 1–43 (MTQAEREQENGKEKEKEREKEKEKEKEQRGIKRPIAPPVIPEP) is disordered. 288 to 291 (DVGD) is a binding site for ATP. Disordered regions lie at residues 410–429 (MTSL…DEHY) and 434–494 (QSKQ…GGAE). Residues 434–443 (QSKQDQSSKA) are compositionally biased toward low complexity.

This sequence belongs to the actin family. ARP8 subfamily. In terms of assembly, component of the chromatin remodeling INO80 complex; specifically part of a complex module associated with the DBINO domain of INO80. Exists as monomers and dimers, but the dimer is most probably the biologically relevant form required for stable interactions with histones that exploits the twofold symmetry of the nucleosome core.

The protein resides in the nucleus. It localises to the chromosome. Functionally, plays an important role in the functional organization of mitotic chromosomes. Exhibits low basal ATPase activity, and unable to polymerize. Its function is as follows. Proposed core component of the chromatin remodeling INO80 complex which is involved in transcriptional regulation, DNA replication and probably DNA repair. Required for the recruitment of INO80 (and probably the INO80 complex) to sites of DNA damage Strongly prefer nucleosomes and H3-H4 tetramers over H2A-H2B dimers, suggesting it may act as a nucleosome recognition module within the complex. The polypeptide is Actin-related protein 8 (actr8) (Salmo salar (Atlantic salmon)).